Reading from the N-terminus, the 179-residue chain is Ribosome maturation factor RimM (179 aa).

The PRC barrel domain occupies 102–179; it reads DGEYYWYQLE…EMKVDWDADF (78 aa).

It belongs to the RimM family. Binds ribosomal protein uS19.

Its subcellular location is the cytoplasm. An accessory protein needed during the final step in the assembly of 30S ribosomal subunit, possibly for assembly of the head region. Essential for efficient processing of 16S rRNA. May be needed both before and after RbfA during the maturation of 16S rRNA. It has affinity for free ribosomal 30S subunits but not for 70S ribosomes. This chain is Ribosome maturation factor RimM, found in Pseudomonas syringae pv. syringae (strain B728a).